We begin with the raw amino-acid sequence, 422 residues long: SPbeta prophage-derived glycosyltransferase SunS (422 aa).

This sequence belongs to the glycosyltransferase 2 family.

Functionally, transfers a hexose moiety onto 'Cys-41' of bacteriocin sublancin-168 (SunA). Accepts UDP-glucose (UDP-Glc), UDP-N-acetylglucosamine (UDP-GlcNAc), UDP-galactose (UDP-Gal), UDP-xylose (UDP-Xyl) and GDP-mannose as substrate. This Bacillus subtilis (strain 168) protein is SPbeta prophage-derived glycosyltransferase SunS (sunS).